A 169-amino-acid chain; its full sequence is Putative pre-16S rRNA nuclease (169 aa).

Over residues Met-1–Arg-19 the composition is skewed to basic and acidic residues. The disordered stretch occupies residues Met-1–Gly-24.

This sequence belongs to the YqgF nuclease family.

Its subcellular location is the cytoplasm. Functionally, could be a nuclease involved in processing of the 5'-end of pre-16S rRNA. This chain is Putative pre-16S rRNA nuclease, found in Mycobacterium sp. (strain KMS).